Reading from the N-terminus, the 132-residue chain is Small ribosomal subunit protein uS8 (132 aa).

This sequence belongs to the universal ribosomal protein uS8 family. As to quaternary structure, part of the 30S ribosomal subunit. Contacts proteins S5 and S12.

Its function is as follows. One of the primary rRNA binding proteins, it binds directly to 16S rRNA central domain where it helps coordinate assembly of the platform of the 30S subunit. The chain is Small ribosomal subunit protein uS8 from Desulfitobacterium hafniense (strain DSM 10664 / DCB-2).